A 237-amino-acid polypeptide reads, in one-letter code: MADS-box protein GGM13 (237 aa).

The 61-residue stretch at 1–61 (MGRGKIEIKR…GKLFEYSSAS (61 aa)) folds into the MADS-box domain. The K-box domain maps to 84-174 (NQHLYCEMTR…CRLLAEQQAA (91 aa)).

Expression specific for female reproductive structures: strong at the adaxial base of the cupules, where ovules will later develop, then in the outermost cell layer of the nucellus, in the inner envelope, and in the inner half of the middle envelope at late stage of ovule development.

It is found in the nucleus. Probable transcription factor. The chain is MADS-box protein GGM13 (GGM13) from Gnetum gnemon (Spanish joint-fir).